The primary structure comprises 327 residues: N-acetylmuramoyl-L-alanine amidase sle1 (327 aa).

An N-terminal signal peptide occupies residues 1 to 25 (MRKKIIATVIGTSALAAVTWTNADA). LysM domains lie at 27 to 70 (TTYK…SLKV), 86 to 129 (STYT…KLKV), and 150 to 193 (TTYT…KLKV). Residues 68-89 (LKVSGSTSSSTSSNTSTGSTYT) form a disordered region. The segment covering 71-87 (SGSTSSSTSSNTSTGST) has biased composition (low complexity). In terms of domain architecture, Peptidase C51 spans 203–327 (GSSSTGSAGY…SQVSSYVYIH (125 aa)).

The protein resides in the secreted. The protein localises to the cell surface. It catalyses the reaction Hydrolyzes the link between N-acetylmuramoyl residues and L-amino acid residues in certain cell-wall glycopeptides.. Peptidoglycan hydrolase involved in the splitting of the septum during cell division. In Staphylococcus saprophyticus subsp. saprophyticus (strain ATCC 15305 / DSM 20229 / NCIMB 8711 / NCTC 7292 / S-41), this protein is N-acetylmuramoyl-L-alanine amidase sle1 (sle1).